Reading from the N-terminus, the 138-residue chain is Urease subunit beta (138 aa).

Positions 115-138 are disordered; sequence RMRAAGFGDTGEAAPDDGDTESDQ. Residues 128 to 138 show a composition bias toward acidic residues; sequence APDDGDTESDQ.

The protein belongs to the urease beta subunit family. Heterotrimer of UreA (gamma), UreB (beta) and UreC (alpha) subunits. Three heterotrimers associate to form the active enzyme.

It localises to the cytoplasm. It carries out the reaction urea + 2 H2O + H(+) = hydrogencarbonate + 2 NH4(+). It functions in the pathway nitrogen metabolism; urea degradation; CO(2) and NH(3) from urea (urease route): step 1/1. In Haloarcula marismortui (strain ATCC 43049 / DSM 3752 / JCM 8966 / VKM B-1809) (Halobacterium marismortui), this protein is Urease subunit beta.